Consider the following 251-residue polypeptide: Small ribosomal subunit protein uS4c (251 aa).

S4 RNA-binding domains follow at residues 110–170 (MRLD…KLVN) and 189–251 (RTLA…QFSE).

It belongs to the universal ribosomal protein uS4 family. As to quaternary structure, part of the 30S ribosomal subunit. Contacts protein S5. The interaction surface between S4 and S5 is involved in control of translational fidelity.

It is found in the plastid. Its subcellular location is the chloroplast. In terms of biological role, one of the primary rRNA binding proteins, it binds directly to 16S rRNA where it nucleates assembly of the body of the 30S subunit. Its function is as follows. With S5 and S12 plays an important role in translational accuracy. In Tetradesmus obliquus (Green alga), this protein is Small ribosomal subunit protein uS4c (rps4).